The chain runs to 324 residues: MEIVAIDIGGTHARFSIAEVSNGRVLSLGEETTFKTAEHASLQLAWERFGEKLGRPLPRAAAIAWAGPVHGEVLKLTNNPWVLRPATLNEKLDIDTHVLINDFGAVAHAVAHMDSSYLDHICGPDEALPSDGVITILGPGTGLGVAHLLRTEGRYFVIETEGGHIDFAPLDRLEDKILARLRERFRRVSIERIISGPGLGNIYEALAAIEGVPFSLLDDIKLWQMALEGKDNLAEAALDRFCLSLGAIAGDLALAQGATSVVIGGGVGLRIASHLPESGFRQRFVSKGRFERVMSKIPVKLITYPQPGLLGAAAAYANKYSEVE.

Residue 6-11 participates in ATP binding; that stretch reads IDIGGT.

It belongs to the bacterial glucokinase family.

It is found in the cytoplasm. The enzyme catalyses D-glucose + ATP = D-glucose 6-phosphate + ADP + H(+). This is Glucokinase from Zymomonas mobilis subsp. mobilis (strain ATCC 31821 / ZM4 / CP4).